Consider the following 247-residue polypeptide: 3,4-dihydroxy-2-butanone 4-phosphate synthase (247 aa).

Residues 38-39 (RE), Asp43, 179-183 (RMGQT), and Glu203 each bind D-ribulose 5-phosphate. Glu39 is a binding site for Mg(2+).

It belongs to the DHBP synthase family. Homodimer. The cofactor is Mg(2+). Mn(2+) serves as cofactor.

It catalyses the reaction D-ribulose 5-phosphate = (2S)-2-hydroxy-3-oxobutyl phosphate + formate + H(+). Its pathway is cofactor biosynthesis; riboflavin biosynthesis; 2-hydroxy-3-oxobutyl phosphate from D-ribulose 5-phosphate: step 1/1. Functionally, catalyzes the conversion of D-ribulose 5-phosphate to formate and 3,4-dihydroxy-2-butanone 4-phosphate. The polypeptide is 3,4-dihydroxy-2-butanone 4-phosphate synthase (Methanosarcina acetivorans (strain ATCC 35395 / DSM 2834 / JCM 12185 / C2A)).